The chain runs to 155 residues: 6,7-dimethyl-8-ribityllumazine synthase (155 aa).

5-amino-6-(D-ribitylamino)uracil-binding positions include Phe-23, 57 to 59 (AFE), and 81 to 83 (AVI). 86–87 (ST) contacts (2S)-2-hydroxy-3-oxobutyl phosphate. His-89 acts as the Proton donor in catalysis. A 5-amino-6-(D-ribitylamino)uracil-binding site is contributed by Phe-114. Arg-128 lines the (2S)-2-hydroxy-3-oxobutyl phosphate pocket.

Belongs to the DMRL synthase family.

The catalysed reaction is (2S)-2-hydroxy-3-oxobutyl phosphate + 5-amino-6-(D-ribitylamino)uracil = 6,7-dimethyl-8-(1-D-ribityl)lumazine + phosphate + 2 H2O + H(+). It participates in cofactor biosynthesis; riboflavin biosynthesis; riboflavin from 2-hydroxy-3-oxobutyl phosphate and 5-amino-6-(D-ribitylamino)uracil: step 1/2. Functionally, catalyzes the formation of 6,7-dimethyl-8-ribityllumazine by condensation of 5-amino-6-(D-ribitylamino)uracil with 3,4-dihydroxy-2-butanone 4-phosphate. This is the penultimate step in the biosynthesis of riboflavin. The sequence is that of 6,7-dimethyl-8-ribityllumazine synthase from Dehalococcoides mccartyi (strain ATCC BAA-2266 / KCTC 15142 / 195) (Dehalococcoides ethenogenes (strain 195)).